Here is an 84-residue protein sequence, read N- to C-terminus: Beta-mammal Tt1g (84 aa).

The N-terminal stretch at 1-20 (MKGMILFISCILLIGIVVEC) is a signal peptide. The LCN-type CS-alpha/beta domain occupies 21–82 (KEGYLMDHEG…VWERATNRCG (62 aa)). 4 cysteine pairs are disulfide-bonded: Cys-31-Cys-81, Cys-35-Cys-57, Cys-43-Cys-62, and Cys-47-Cys-64. Position 81 is a cysteine amide (Cys-81).

This sequence belongs to the long (4 C-C) scorpion toxin superfamily. Sodium channel inhibitor family. Beta subfamily. As to expression, expressed by the venom gland.

The protein resides in the secreted. Functionally, beta toxins modify sodium channel function in two ways: an excitatory effect (shifting the activation process to more negative potential) and/or a depressant effect (reducing the peak current). At concentration of 500 nM this toxin produces channel opening at more negative potentials in hNav1.2/SCN2A and hNav1.3/SCN3A, which shows the biggest effect. On the other hand the peak current is decreased in hNav1.4/SCN4A and hNav1.5/SCN5A channels, without apparent modification of the activation gate. This toxin is active against mammals. This chain is Beta-mammal Tt1g, found in Tityus trivittatus (Argentinean scorpion).